The chain runs to 5537 residues: Histone-lysine N-methyltransferase 2D (5537 aa).

The segment at 1–60 (MDSQKLAGEDKDSEPAADGPAASEDPSATESDLPNPHVGEVSVLSSGSPRLQETPQDCSG) is disordered. The residue at position 27 (S27) is a Phosphoserine. The segment covering 43 to 57 (VLSSGSPRLQETPQD) has biased composition (polar residues). The C2HC pre-PHD-type 1; degenerate zinc finger occupies 104 to 149 (GPNEAVLPSEDLSQIGFPEGLTPAHLGEPGGSCWAHHWCAAWSAGV). 3 consecutive PHD-type zinc fingers follow at residues 170-218 (QRCS…PEHS), 226-276 (EARC…CKVC), and 273-323 (CKVC…CRVC). An RING-type 1; atypical zinc finger spans residues 229-274 (CAVCEGPGELCDLFFCTSCGHHYHGACLDTALTARKRAGWQCPECK). The RING-type 2; degenerate zinc finger occupies 276–321 (CQACRKPGNDSKMLVCETCDKGYHTFCLKPPMEELPAHSWKCKACR). 4 disordered regions span residues 368–387 (VCSR…EPDA), 393–416 (QGQP…QCEA), 436–1331 (EEMP…RLKS), and 1340–1359 (VVAD…DDDT). Residues 439–668 (PLLPPPEESP…VSRLSPPPEE (230 aa)) form a 15 X 5 AA repeats of S/P-P-P-E/P-E/A region. Over residues 440-473 (LLPPPEESPLSPPPEESPTSPPPEASRLSPPPEE) the composition is skewed to pro residues. 3 consecutive repeat copies span residues 442-446 (PPPEE), 460-464 (PPPEA), and 469-473 (PPPEE). Residues 474–483 (LPASPLPEAL) are compositionally biased toward low complexity. Over residues 494–509 (LSPPPEESPLSPPPES) the composition is skewed to pro residues. A run of 2 repeats spans residues 496 to 500 (PPPEE) and 504 to 508 (SPPPE). Low complexity predominate over residues 510–519 (SPFSPLEESP). 2 stretches are compositionally biased toward pro residues: residues 520-547 (LSPP…PLSP) and 554-595 (LSPP…PPPE). Repeat copies occupy residues 521–525 (SPPEE), 555–559 (SPPPE), 564–568 (SPPPE), 573–577 (SPPPE), and 582–586 (SPPPE). The segment covering 596–607 (ASRLFPPFEESP) has biased composition (low complexity). The segment covering 608–649 (LSPPPEESPLSPPPEASRLSPPPEDSPMSPPPEESPMSPPPE) has biased composition (pro residues). A run of 4 repeats spans residues 609 to 613 (SPPPE), 618 to 622 (SPPPE), 627 to 631 (SPPPE), and 645 to 649 (SPPPE). The segment covering 650–662 (VSRLSPLPVVSRL) has biased composition (low complexity). Repeat 15 spans residues 663 to 667 (SPPPE). Positions 663-712 (SPPPEESPLSPPPEESPTSPPPEASRLSPPPEDSPTSPPPEDSPASPPPE) are enriched in pro residues. Residues 713–725 (DSLMSLPLEESPL) are compositionally biased toward low complexity. The residue at position 744 (S744) is a Phosphoserine. 2 stretches are compositionally biased toward basic and acidic residues: residues 745–760 (PRPE…EEPH) and 845–869 (RPEE…KPPE). 2 stretches are compositionally biased toward low complexity: residues 889–903 (PSLS…LSEP) and 911–928 (LPEE…LSPQ). Residues 929-940 (LMPPDPLPPPLS) show a composition bias toward pro residues. Residues 941 to 954 (PIITAAAPPALSPL) show a composition bias toward low complexity. Residues 994–1008 (EPVPPMILPPSPGSP) show a composition bias toward pro residues. The segment covering 1048–1057 (PLSVPSPLSP) has biased composition (low complexity). A compositionally biased stretch (basic and acidic residues) spans 1068-1080 (AELHEMETEKVSE). S1151 carries the post-translational modification Phosphoserine. T1195 carries the phosphothreonine modification. Residues 1207–1216 (EISNLSQGDA) are compositionally biased toward polar residues. A Phosphoserine modification is found at S1249. T1267 carries the phosphothreonine modification. At S1270 the chain carries Phosphoserine. 2 stretches are compositionally biased toward basic residues: residues 1289–1302 (GRRR…RIKQ) and 1310–1329 (GRRR…RARL). 3 PHD-type zinc fingers span residues 1377–1430 (QDMC…CIVC), 1427–1477 (CIVC…CVSC), and 1504–1559 (LVTC…CQPY). Residues 1507 to 1557 (CPICHAPYVEEDLLIQCRHCERWMHAGCESLFTEDDVEQAADEGFDCVSCQ) form an RING-type 3; atypical zinc finger. The residue at position 1606 (S1606) is a Phosphoserine. Disordered stretches follow at residues 1610–1767 (KRRQ…LEDM), 1793–1889 (GVGR…MESK), 1904–2002 (EQHL…NQRS), and 2165–2683 (PQVP…QRQR). Residues 1637–1666 (PDDKKDGDLDTDELLKGEGGVEHMECEIKL) show a composition bias toward basic and acidic residues. S1671 carries the phosphoserine modification. Positions 1675–1685 (EPGKEETEESK) are enriched in basic and acidic residues. 2 stretches are compositionally biased toward basic residues: residues 1702 to 1712 (RQRKSHTRTKK) and 1753 to 1762 (KQQRRGRKKS). Composition is skewed to basic and acidic residues over residues 1806 to 1825 (AKGD…KGDD) and 1832 to 1841 (EESRGLEGKA). Residues S1820 and S1834 each carry the phosphoserine modification. Phosphothreonine is present on residues T1843 and T1865. The segment covering 1874-1889 (DLDRISTEELPKMESK) has biased composition (basic and acidic residues). Residues 1979 to 1990 (TTPSTPTTPTTE) show a composition bias toward low complexity. The span at 2190–2209 (PTAPPTYPPYPSPTGAPAQP) shows a compositional bias: pro residues. S2239 is subject to Phosphoserine. T2240 carries the phosphothreonine modification. Position 2246 is an N6-acetyllysine (K2246). S2260 and S2274 each carry phosphoserine. The segment covering 2280–2292 (ESRKALEVKKEEL) has biased composition (basic and acidic residues). A phosphoserine mark is found at S2309, S2311, and S2342. Pro residues-rich tracts occupy residues 2350-2365 (QEPP…PPSH) and 2379-2393 (AQPP…PPPE). Low complexity-rich tracts occupy residues 2409 to 2431 (SRVP…RPLS) and 2494 to 2505 (FPAALPAGPAGE). Residue R2535 is modified to Asymmetric dimethylarginine. Residues 2547–2560 (LKPPVPQPGLPPPH) show a composition bias toward pro residues. The segment covering 2574–2584 (KPQSTNYTVAT) has biased composition (polar residues). Positions 2589–2609 (PSGSPLGPSSGSTGESYGLSP) are enriched in low complexity. Positions 2610–2621 (LRPPSVLPPPAP) are enriched in pro residues. S2640 is subject to Phosphoserine. Positions 2669–2707 (MSGLSQTELEKQRQRQRLRELLIRQQIQRNTLRQEKETA) form a coiled coil. The LXXLL motif 1 signature appears at 2686–2690 (LRELL). Disordered regions lie at residues 2697 to 2814 (RNTL…QQQQ) and 2835 to 2996 (ARFP…LDDD). Over residues 2707–2722 (AAAAAGAVGPPGSWGA) the composition is skewed to low complexity. Polar residues-rich tracts occupy residues 2733–2746 (SRGQ…QDKS) and 2781–2790 (PSSMDVNSRQ). R2836 bears the Asymmetric dimethylarginine mark. The span at 2931 to 2940 (PQKPSAPPAP) shows a compositional bias: pro residues. The LXXLL motif 2 signature appears at 3038 to 3042 (LDDLL). The disordered stretch occupies residues 3078 to 3110 (EKAEREALLRGVEPGPLGPEERPPPAADASEPR). K3079 bears the N6-acetyllysine mark. Position 3130 is a phosphoserine (S3130). Disordered regions lie at residues 3147–3209 (ANSL…GSSL) and 3263–3339 (KQQL…AHAL). T3197 carries the phosphothreonine modification. Composition is skewed to low complexity over residues 3198–3209 (PSPLSGPGGSSL), 3263–3289 (KQQL…LSAP), and 3301–3320 (GSSP…LAGA). A Phosphoserine modification is found at S3199. A coiled-coil region spans residues 3249 to 3282 (IEDLLEHEKKELQKKQQLSAQLQPAQQQQQQQQQ). The segment covering 3325–3334 (LPQPLMPTQP) has biased composition (pro residues). An N6-acetyllysine modification is found at K3433. Disordered stretches follow at residues 3462-3499 (LSGG…TFAQ) and 3596-3673 (RNKQ…GPFL). The stretch at 3562–3614 (EKLKLVTEQQSKIQKQLDQVRKQQKEHTNLMAEYRNKQQQQQQQQQQQQQQHS) forms a coiled coil. Composition is skewed to low complexity over residues 3599–3612 (QQQQ…QQQQ) and 3631–3643 (LPGQ…GLQP). The stretch at 3714 to 3750 (RLLQERQLQLQQQRMQLAQKLQQQQQQQQQQQHLLGQ) forms a coiled coil. R3727 carries the post-translational modification Asymmetric dimethylarginine. Positions 3758–3802 (QQGPGVQTNQALGPKPQGLMPPSSHQGLLVQQLSPQPPQGPQGML) are disordered. Positions 3897–3975 (LQQLQQQQQL…FQQQQQQQQM (79 aa)) form a coiled coil. Residues 3984 to 4191 (LLSPQQQQQQ…GQGLPGVGIM (208 aa)) form a disordered region. The span at 4012–4023 (PGALGPTLLLTG) shows a compositional bias: low complexity. Positions 4024-4045 (KEQNTVDPAVSSEATEGPSTHQ) are enriched in polar residues. The span at 4073 to 4108 (SQLLLVQPQPQPQPSSLQLQPPLRLPGQQQQQVSLL) shows a compositional bias: low complexity. Residues 4111–4120 (AGGGSHGQLG) show a composition bias toward gly residues. A compositionally biased stretch (polar residues) spans 4137–4154 (PSVSLGDQPGSMTQNLLG). R4198 carries the post-translational modification Asymmetric dimethylarginine. At S4215 the chain carries Phosphoserine. An LXXLL motif 3 motif is present at residues 4222-4226 (LQALL). Disordered regions lie at residues 4233–4398 (QSQA…VPGH) and 4410–4452 (ASQL…LLLA). Positions 4237-4251 (VRQTPPYQEPGTQTS) are enriched in polar residues. Residues 4252 to 4282 (PLQGLLGCQPQLGGFPGPQTGPLQELGAGPR) are compositionally biased toward low complexity. An LXXLL motif 4 motif is present at residues 4253–4257 (LQGLL). Residues 4283-4293 (PQGPPRLPAPP) are compositionally biased toward pro residues. Low complexity-rich tracts occupy residues 4294-4305 (GALSTGPVLGPV) and 4320-4331 (PSQLPSPSSQLP). Over residues 4338–4357 (PTHPGTPKPQGPTLEPPPGR) the composition is skewed to pro residues. Position 4359 is a phosphoserine (S4359). An LXXLL motif 5 motif is present at residues 4463–4467 (LQKLL). Position 4465 is an N6-acetyllysine (K4465). Disordered regions lie at residues 4503–4544 (QGTP…KEDG) and 4613–4727 (KNNL…HLGS). Positions 4619–4633 (PPTPPSSLPPTPPPS) are enriched in pro residues. Basic and acidic residues predominate over residues 4648 to 4673 (LGEHPKDAASARDSERALRDTSEVKS). S4738 is subject to Phosphoserine. Residue K4756 forms a Glycyl lysine isopeptide (Lys-Gly) (interchain with G-Cter in SUMO2) linkage. K4776 carries the N6-acetyllysine modification. A phosphoserine mark is found at S4822 and S4849. The disordered stretch occupies residues 4822–4857 (SPARAGTEPKKGEAEGPGGKEKGLEGKSPDTGPDWL). The segment covering 4828-4849 (TEPKKGEAEGPGGKEKGLEGKS) has biased composition (basic and acidic residues). Residue K4880 forms a Glycyl lysine isopeptide (Lys-Gly) (interchain with G-Cter in SUMO2) linkage. Residues 4905 to 4980 (QLSAPPPEEP…GEDSRPPRLK (76 aa)) are disordered. Over residues 4908-4931 (APPPEEPSPPPSPLAPSPASPPTE) the composition is skewed to pro residues. Low complexity predominate over residues 4932 to 4941 (PLVELPTEPL). Positions 4966 to 4976 (RPPEEGEDSRP) are enriched in basic and acidic residues. The LXXLL motif 6 motif lies at 4990–4994 (LRLLL). Residues 5029 to 5069 (MRRCCFCHEEGDGATDGPARLLNLDLDLWVHLNCALWSTEV) form a C2HC pre-PHD-type 2 zinc finger. Residues 5090–5137 (TKCSLCQRTGATSSCNRMRCPNVYHFACAIRAKCMFFKDKTMLCPMHK) form a PHD-type 7 zinc finger. Residues 5175 to 5235 (LHMFRVGGLV…CCYRCSIGEN (61 aa)) form the FYR N-terminal domain. The 86-residue stretch at 5236-5321 (NGRPEFVIKV…ESCQNYLFRY (86 aa)) folds into the FYR C-terminal domain. The short motif at 5337–5342 (GCARSE) is the WDR5 interaction motif (WIN) element. An SET domain is found at 5397-5513 (NNVYLARSRI…KGEELTYDYQ (117 aa)). S-adenosyl-L-methionine contacts are provided by residues Y5451 and 5474-5475 (NH). Positions 5477, 5525, 5527, and 5532 each coordinate Zn(2+). The 17-residue stretch at 5521 to 5537 (HKIPCHCGAWNCRKWMN) folds into the Post-SET domain.

This sequence belongs to the class V-like SAM-binding methyltransferase superfamily. Histone-lysine methyltransferase family. TRX/MLL subfamily. As to quaternary structure, component of the MLL2 complex (also named ASCOM complex), at least composed of catalytic subunit KMT2D/MLL2, ASH2L, RBBP5, WDR5, NCOA6, DPY30, KDM6A, PAXIP1/PTIP, PAGR1 and alpha- and beta-tubulin. Forms a core complex with the evolutionary conserved subcomplex WRAD composed of WDR5, RBBP5, ASH2L/ASH2 and DPY30 subunits; WRAD differentially stimulates the methyltransferase activity. Interacts with ESR1; interaction is direct. Interacts (via WIN motif) with WDR5. As to expression, expressed in most adult tissues, including a variety of hematoipoietic cells, with the exception of the liver.

It is found in the nucleus. It carries out the reaction L-lysyl(4)-[histone H3] + S-adenosyl-L-methionine = N(6)-methyl-L-lysyl(4)-[histone H3] + S-adenosyl-L-homocysteine + H(+). Histone methyltransferase that catalyzes methyl group transfer from S-adenosyl-L-methionine to the epsilon-amino group of 'Lys-4' of histone H3 (H3K4). Part of chromatin remodeling machinery predominantly forms H3K4me1 methylation marks at active chromatin sites where transcription and DNA repair take place. Acts as a coactivator for estrogen receptor by being recruited by ESR1, thereby activating transcription. This Homo sapiens (Human) protein is Histone-lysine N-methyltransferase 2D (KMT2D).